A 411-amino-acid chain; its full sequence is Glutamyl-tRNA reductase (411 aa).

Substrate contacts are provided by residues 48-51, serine 106, 111-113, and glutamine 117; these read TCNR and EDQ. The Nucleophile role is filled by cysteine 49. 186 to 191 provides a ligand contact to NADP(+); it reads GAGDMG.

Belongs to the glutamyl-tRNA reductase family. Homodimer.

The catalysed reaction is (S)-4-amino-5-oxopentanoate + tRNA(Glu) + NADP(+) = L-glutamyl-tRNA(Glu) + NADPH + H(+). The protein operates within porphyrin-containing compound metabolism; protoporphyrin-IX biosynthesis; 5-aminolevulinate from L-glutamyl-tRNA(Glu): step 1/2. Its function is as follows. Catalyzes the NADPH-dependent reduction of glutamyl-tRNA(Glu) to glutamate 1-semialdehyde (GSA). This Clostridium novyi (strain NT) protein is Glutamyl-tRNA reductase.